Reading from the N-terminus, the 328-residue chain is Pyruvate dehydrogenase E1 component subunit beta (328 aa).

Glu60 contacts thiamine diphosphate. K(+)-binding residues include Ile113, Ile162, and Asn166.

In terms of assembly, heterodimer of an alpha and a beta chain. Thiamine diphosphate serves as cofactor.

It is found in the plastid. The protein resides in the chloroplast. It catalyses the reaction N(6)-[(R)-lipoyl]-L-lysyl-[protein] + pyruvate + H(+) = N(6)-[(R)-S(8)-acetyldihydrolipoyl]-L-lysyl-[protein] + CO2. Its function is as follows. The pyruvate dehydrogenase complex catalyzes the overall conversion of pyruvate to acetyl-CoA and CO(2). It contains multiple copies of three enzymatic components: pyruvate dehydrogenase (E1), dihydrolipoamide acetyltransferase (E2) and lipoamide dehydrogenase (E3). This Staurastrum punctulatum (Green alga) protein is Pyruvate dehydrogenase E1 component subunit beta (pdhB).